Consider the following 246-residue polypeptide: uncharacterized protein (246 aa).

Residues 204-243 (TTKLKKLEKEIHELPYMLINGKITYEEYKKRIREIEKEIG) adopt a coiled-coil conformation.

This is an uncharacterized protein from Aquifex aeolicus (strain VF5).